Reading from the N-terminus, the 153-residue chain is uncharacterized protein (153 aa).

A signal peptide spans methionine 1–alanine 25.

This is an uncharacterized protein from Pasteurella multocida (strain Pm70).